The primary structure comprises 261 residues: Major biofilm matrix component (261 aa).

Positions 1–27 (MGMKKKLSLGVASAALGLALVGGGTWA) are cleaved as a signal peptide. The tract at residues 241-261 (DHTDKDGYVKENEKAHSEDKN) is disordered.

This sequence belongs to the peptidase M73 family. Forms fibers. Fibers have variable length and are 10-15 nm width. Interacts with obg (AC P20964) in pull-down experiments.

Its subcellular location is the secreted. The protein resides in the forespore intermembrane space. In terms of biological role, tasA is the major protein component of the biofilm extracellular matrix. It forms amyloid fibers that bind cells together in the biofilm. Exhibits an antibacterial activity against a variety of Gram-positive and Gram-negative bacteria. In laboratory strains, is also involved in proper spore coat assembly. This Bacillus subtilis (strain 168) protein is Major biofilm matrix component.